Here is a 242-residue protein sequence, read N- to C-terminus: DNA repair protein RecO (242 aa).

It belongs to the RecO family. Monomer.

Involved in DNA repair and RecF pathway recombination. The protein is DNA repair protein RecO of Salmonella enteritidis PT4 (strain P125109).